The following is a 301-amino-acid chain: tRNA pseudouridine synthase B (301 aa).

Asp38 acts as the Nucleophile in catalysis.

This sequence belongs to the pseudouridine synthase TruB family. Type 1 subfamily.

The catalysed reaction is uridine(55) in tRNA = pseudouridine(55) in tRNA. Functionally, responsible for synthesis of pseudouridine from uracil-55 in the psi GC loop of transfer RNAs. This is tRNA pseudouridine synthase B from Clostridioides difficile (strain 630) (Peptoclostridium difficile).